Consider the following 479-residue polypeptide: Beta-amyrin 28-monooxygenase (479 aa).

Residues 5 to 25 (FYLSLLLLFVTFISLSLFFIF) form a helical membrane-spanning segment. Cys-426 provides a ligand contact to heme.

Belongs to the cytochrome P450 family. Heme is required as a cofactor. In terms of tissue distribution, expressed in roots, nodules and flowers.

It localises to the membrane. The enzyme catalyses beta-amyrin + 3 reduced [NADPH--hemoprotein reductase] + 3 O2 = oleanolate + 3 oxidized [NADPH--hemoprotein reductase] + 4 H2O + 4 H(+). Its function is as follows. Catalyzes the carboxylation of beta-amyrin at the C-28 position to form oleanolic acid. Involved in an early step in the hemolytic saponin biosynthetic pathway. Catalyzes the carboxylation of alpha-amyrin and lupeol at the C-28 position to form ursolic acid and betulinic acid respectively. In Medicago truncatula (Barrel medic), this protein is Beta-amyrin 28-monooxygenase.